The primary structure comprises 859 residues: ATP-dependent RNA helicase DDX24 (859 aa).

N6-acetyllysine is present on lysine 17. Residue serine 60 is modified to Phosphoserine. The interval 61–175 (PAKNPSSLFS…SQSTAAKVPK (115 aa)) is disordered. Position 71 is an N6-acetyllysine (lysine 71). Serine 82 and serine 94 each carry phosphoserine. Over residues 82–91 (SEEEEEEEGE) the composition is skewed to acidic residues. The span at 95 to 105 (PKKKIKLKKSK) shows a compositional bias: basic residues. Residues 106–115 (NVATEGTSTQ) show a composition bias toward polar residues. The Q motif motif lies at 192–220 (SAWKDLFVPRPVLRALSFLGFSAPTPIQV). The region spanning 224-528 (APAIRDKLDI…RILHKKHTKK (305 aa)) is the Helicase ATP-binding domain. ATP is bound at residue 237–244 (AETGSGKT). Residues 262–374 (NAAPPPSNTE…QTGNLKQELD (113 aa)) form a disordered region. Over residues 277–293 (TRPEAGAETRSPGKAEA) the composition is skewed to basic and acidic residues. Residues serine 287 and serine 295 each carry the phosphoserine modification. Residues 294–304 (ESDALPDDTVI) show a composition bias toward acidic residues. Threonine 302 bears the Phosphothreonine mark. Residue lysine 370 forms a Glycyl lysine isopeptide (Lys-Gly) (interchain with G-Cter in SUMO2) linkage. The DEAD box signature appears at 471 to 474 (DEAD). One can recognise a Helicase C-terminal domain in the interval 578–723 (YLYYFLMQYP…LFPVQTKYMD (146 aa)). Residues lysine 624, lysine 808, and lysine 825 each participate in a glycyl lysine isopeptide (Lys-Gly) (interchain with G-Cter in SUMO2) cross-link. Composition is skewed to polar residues over residues 799 to 814 (PLFTESQKTKYPTQSG) and 823 to 834 (PSKSESALSCLS). Residues 799-859 (PLFTESQKTK…EQPQPSTSAN (61 aa)) form a disordered region.

The protein belongs to the DEAD box helicase family. DDX24/MAK5 subfamily. In terms of assembly, interacts with FADD. Interacts with RIPK1; this interaction disrupts RLR signaling activation of IFN-dependent transcription factor IRF7. Interacts with NIP7. Interacts with EP300; this interaction prevents TP53 acetylation mediated by EP300. Post-translationally, ubiquitinated by MDM2 without targeting DDX24 for proteasomal degradation. Instead, polyubiquitylated DDX24 promotes interaction with NIP7, a component of pre-rRNP processing complex, and associates with pre-rRNA molecules and pre-ribosomal particles.

The protein localises to the cytoplasm. Its subcellular location is the nucleus. It catalyses the reaction ATP + H2O = ADP + phosphate + H(+). ATP-dependent RNA helicase that plays a role in various aspects of RNA metabolism including pre-mRNA splicing and is thereby involved in different biological processes such as cell cycle regulation or innate immunity. Plays an inhibitory role in TP53 transcriptional activity and subsequently in TP53 controlled cell growth arrest and senescence by inhibiting its EP300 mediated acetylation. Negatively regulates cytosolic RNA-mediated innate immune signaling at least in part by affecting RIPK1/IRF7 interactions. Alternatively, possesses antiviral activity by recognizing gammaherpesvirus transcripts in the context of lytic reactivation. Plays an essential role in cell cycle regulation in vascular smooth muscle cells by interacting with and regulating FANCA (Fanconi anemia complementation group A) mRNA. This chain is ATP-dependent RNA helicase DDX24 (DDX24), found in Pongo abelii (Sumatran orangutan).